Consider the following 623-residue polypeptide: Frizzled and smoothened-like protein M (623 aa).

Positions 1 to 18 (MKSIFIIIFILYVFQVNS) are cleaved as a signal peptide. Residues 19 to 243 (QTIYPIDPSG…WDQLYNLSNT (225 aa)) lie on the Extracellular side of the membrane. Residues 25–163 (DPSGKCEQYI…NYSEFNLTNY (139 aa)) form the FZ domain. 2 disulfides stabilise this stretch: Cys30-Cys100 and Cys42-Cys93. 8 N-linked (GlcNAc...) asparagine glycosylation sites follow: Asn57, Asn106, Asn109, Asn154, Asn159, Asn169, Asn199, and Asn239. Residues 244-264 (LAVLSTFGSLYLLVTFIILNP) traverse the membrane as a helical segment. Residues 265–273 (KVTSFDRMY) are Cytoplasmic-facing. A helical membrane pass occupies residues 274–294 (GFFNGSVFMMSLSGVILFIAG). Topologically, residues 295–317 (GPRALIKDGGARISVFEDPLCSS) are extracellular. The chain crosses the membrane as a helical span at residues 318 to 338 (TGFIFQLFAINAILFWAYMGF). Residues 339-354 (DLWWRVKYITKPLNIQ) lie on the Cytoplasmic side of the membrane. Residues 355 to 375 (KYYVPIAFTISFIFSVIPLAT) traverse the membrane as a helical segment. Over 376-397 (KNYRMVRGNIHCWVHKAVLQNT) the chain is Extracellular. The chain crosses the membrane as a helical span at residues 398-418 (LFFGPLGLTLTISTGFIGLVI). Topologically, residues 419–439 (YEIYKIVKATGRGGIMKLEIK) are cytoplasmic. A helical transmembrane segment spans residues 440 to 460 (PILNIVLIYFSFVYIFAFNFH). Over 461–494 (NDNNSKNTYGSIDEFFQCTLESDDPSKCTVGGPS) the chain is Extracellular. N-linked (GlcNAc...) asparagine glycosylation is present at Asn463. Residues 495–515 (IGSLGYFIYCIRIYGIYCFFL) form a helical membrane-spanning segment. Topologically, residues 516–623 (QGLNERAFKI…DIEIGSVNIK (108 aa)) are cytoplasmic. Positions 552–590 (PSESGNSSTTAGTSTTINNSNINKKNNNSKPTLSTMDSN) are disordered. Low complexity predominate over residues 555 to 580 (SGNSSTTAGTSTTINNSNINKKNNNS).

It belongs to the G-protein coupled receptor Fz/Smo family.

Its subcellular location is the membrane. This Dictyostelium discoideum (Social amoeba) protein is Frizzled and smoothened-like protein M (fslM-1).